We begin with the raw amino-acid sequence, 436 residues long: Cyclin-dependent kinase 11B (436 aa).

A Nuclear localization signal motif is present at residues 25–30 (VKKNRK). The tract at residues 30–44 (KKLVKGLHRAGPPPE) is calmodulin-binding. Residues 79-364 (FQCLNRIEEG…AEDGLKHEYF (286 aa)) enclose the Protein kinase domain. ATP contacts are provided by residues 85–93 (IEEGTYGVV) and Lys108. A Phosphoserine; by CDK7 modification is found at Ser123. Thr129 carries the phosphothreonine; by CDK7 modification. Residue Asp203 is the Proton acceptor of the active site. Phosphoserine is present on Ser230. Tyr235 is subject to Phosphotyrosine. Thr236 carries the phosphothreonine modification. A Glycyl lysine isopeptide (Lys-Gly) (interchain with G-Cter in SUMO2) cross-link involves residue Lys282. The disordered stretch occupies residues 383 to 406 (SEQQCVKRGTSPKPPEGGLGYSQL). Phosphothreonine is present on Thr392. The residue at position 393 (Ser393) is a Phosphoserine.

It belongs to the protein kinase superfamily. CMGC Ser/Thr protein kinase family. CDC2/CDKX subfamily. May interact PAK1 and RANBP9. p110C interacts with RNPS1. Interacts with CCND3. Interacts with CCNL1 and CCNL2. Forms complexes with pre-mRNA-splicing factors, including at least SRSF1, SRSF2 AND SRSF7/SLU7. Mg(2+) serves as cofactor.

It is found in the cytoplasm. The protein localises to the nucleus membrane. Its subcellular location is the endomembrane system. It localises to the perinuclear region. It catalyses the reaction L-seryl-[protein] + ATP = O-phospho-L-seryl-[protein] + ADP + H(+). It carries out the reaction L-threonyl-[protein] + ATP = O-phospho-L-threonyl-[protein] + ADP + H(+). Plays multiple roles in cell cycle progression, cytokinesis and apoptosis. Involved in pre-mRNA splicing in a kinase activity-dependent manner. May act as a negative regulator of normal cell cycle progression. The protein is Cyclin-dependent kinase 11B (Cdk11b) of Rattus norvegicus (Rat).